A 423-amino-acid chain; its full sequence is E3 ubiquitin-protein ligase makorin-2 (423 aa).

2 consecutive C3H1-type zinc fingers follow at residues 2–29 (STKQ…HDLN) and 31–58 (SKPS…HIKP). Residues 59–90 (SSRGGGGGAPEDQAGGGGAGGGGAGIGGAGGG) are disordered. Residues 61-90 (RGGGGGAPEDQAGGGGAGGGGAGIGGAGGG) are compositionally biased toward gly residues. Residues 162-189 (QNLPQLCPYAANGHCFYEENCTYLHGDL) form a C3H1-type 3 zinc finger. A makorin-type Cys-His region spans residues 190-219 (CEVCGLQVLHPHDSEQRRAHEKMCLAAFEA). The RING-type zinc finger occupies 235–289 (CSICMEVVVQKANPSDRRFGILSSCCHTFCLACIRKWRCTRTFSNTIIKSCPECR). The C3H1-type 4 zinc finger occupies 318 to 347 (GVSKKACKYFDQGRGSCPFGGKCLYLHAFP).

Its subcellular location is the cytoplasm. The protein resides in the nucleus. It carries out the reaction S-ubiquitinyl-[E2 ubiquitin-conjugating enzyme]-L-cysteine + [acceptor protein]-L-lysine = [E2 ubiquitin-conjugating enzyme]-L-cysteine + N(6)-ubiquitinyl-[acceptor protein]-L-lysine.. It participates in protein modification; protein ubiquitination. E3 ubiquitin ligase catalyzing the covalent attachment of ubiquitin moieties onto substrate proteins. Inhibits neurogenesis and axis formation during embryonic development by modulating the phosphatidylinositol 3-kinase (PI3K) pathway. Acts downstream of PI3K and akt1 to up-regulate gsk3b mRNA expression. This Seriola quinqueradiata (Five-ray yellowtail) protein is E3 ubiquitin-protein ligase makorin-2 (mkrn2).